The sequence spans 91 residues: Protein SPATA45 homolog (91 aa).

The disordered stretch occupies residues 42–91 (RADRKHDPNGFNSSVFKGASNQHQESSLDFATAEPEFHRERRHFPEKSEY). Over residues 51–70 (GFNSSVFKGASNQHQESSLD) the composition is skewed to polar residues. A compositionally biased stretch (basic and acidic residues) spans 76–91 (PEFHRERRHFPEKSEY).

Belongs to the SPATA45 family.

In Nematostella vectensis (Starlet sea anemone), this protein is Protein SPATA45 homolog.